We begin with the raw amino-acid sequence, 152 residues long: MINHNIISFKKFEAIFEQRPGGLELNMPIEIGSNNVDLTSKPFNIKGGSHYKVKIGYMASEPITDLICQIHTFRKSTPYGRDTQKVGDICANTNDLEFDFPKFGWEQASTQSSSMGDYTIKMYFKGNGNQDLATFFYSFNVAPDWENALPIN.

This sequence belongs to the Rho GDI family.

The protein localises to the cytoplasm. Regulates the GDP/GTP exchange reaction of the Rho proteins by inhibiting the dissociation of GDP from them, and the subsequent binding of GTP to them. The polypeptide is Putative rho GDP-dissociation inhibitor 2 (rdiB) (Dictyostelium discoideum (Social amoeba)).